The chain runs to 362 residues: Biotin synthase (362 aa).

Positions 46–273 constitute a Radical SAM core domain; sequence NEVQVSTLLS…ASHVRLSAGR (228 aa). [4Fe-4S] cluster contacts are provided by Cys-61, Cys-65, and Cys-68. The [2Fe-2S] cluster site is built by Cys-105, Cys-136, Cys-196, and Arg-268.

This sequence belongs to the radical SAM superfamily. Biotin synthase family. Homodimer. The cofactor is [4Fe-4S] cluster. [2Fe-2S] cluster is required as a cofactor.

It catalyses the reaction (4R,5S)-dethiobiotin + (sulfur carrier)-SH + 2 reduced [2Fe-2S]-[ferredoxin] + 2 S-adenosyl-L-methionine = (sulfur carrier)-H + biotin + 2 5'-deoxyadenosine + 2 L-methionine + 2 oxidized [2Fe-2S]-[ferredoxin]. It functions in the pathway cofactor biosynthesis; biotin biosynthesis; biotin from 7,8-diaminononanoate: step 2/2. Catalyzes the conversion of dethiobiotin (DTB) to biotin by the insertion of a sulfur atom into dethiobiotin via a radical-based mechanism. The polypeptide is Biotin synthase (Aeromonas salmonicida (strain A449)).